The primary structure comprises 215 residues: Adenylate kinase (215 aa).

10-15 (GAGKGT) is a binding site for ATP. The tract at residues 30–59 (STGDMLRAAIKAQTPMGKMAKEFMDAGKLV) is NMP. AMP is bound by residues T31, R36, 57–59 (KLV), 85–88 (GFPR), and Q92. Positions 122–159 (GRRVHPASGRTYHITYNPPKVDDKDNETGDDLIQREDD) are LID. ATP-binding positions include R123 and 132 to 133 (TY). 2 residues coordinate AMP: R156 and R167. Q201 is an ATP binding site.

This sequence belongs to the adenylate kinase family. In terms of assembly, monomer.

The protein resides in the cytoplasm. It carries out the reaction AMP + ATP = 2 ADP. It functions in the pathway purine metabolism; AMP biosynthesis via salvage pathway; AMP from ADP: step 1/1. In terms of biological role, catalyzes the reversible transfer of the terminal phosphate group between ATP and AMP. Plays an important role in cellular energy homeostasis and in adenine nucleotide metabolism. In Hydrogenovibrio crunogenus (strain DSM 25203 / XCL-2) (Thiomicrospira crunogena), this protein is Adenylate kinase.